We begin with the raw amino-acid sequence, 161 residues long: Glycine cleavage system H protein 3 (161 aa).

Residues 40-122 (TVTLGLTDVG…YGDAWIVKIK (83 aa)) enclose the Lipoyl-binding domain. An N6-lipoyllysine modification is found at K81.

It belongs to the GcvH family. In terms of assembly, the glycine cleavage system is composed of four proteins: P, T, L and H. (R)-lipoate serves as cofactor.

Functionally, the glycine cleavage system catalyzes the degradation of glycine. The H protein shuttles the methylamine group of glycine from the P protein to the T protein. The sequence is that of Glycine cleavage system H protein 3 from Aquifex aeolicus (strain VF5).